A 294-amino-acid chain; its full sequence is Protein RarD (294 aa).

At 1–11 (MDAKQTRQGVL) the chain is on the cytoplasmic side. A helical membrane pass occupies residues 12 to 34 (LALAAYFIWGIAPAYFKLIYYVP). The 128-residue stretch at 18 to 145 (FIWGIAPAYF…AVCGVLVQLW (128 aa)) folds into the EamA domain. Residues 35–37 (ADE) are Periplasmic-facing. Residues 38-60 (ILTHRVIWSFFFMVALLSVSRQW) traverse the membrane as a helical segment. Residues 61–72 (RQVKRLLKTPKK) lie on the Cytoplasmic side of the membrane. A helical membrane pass occupies residues 73–95 (IFLLALSAVLVGGNWLLFIWAVN). Over 96–99 (NHHM) the chain is Periplasmic. Residues 100–122 (LEASLGYFINPLVNILLGMIFLG) form a helical membrane-spanning segment. Residues 123-128 (ERFRRM) lie on the Cytoplasmic side of the membrane. A helical membrane pass occupies residues 129-146 (QWLAVILAVCGVLVQLWT). The Periplasmic segment spans residues 147-149 (FGS). A helical membrane pass occupies residues 150–167 (LPIIALGLAFSFAFYGLV). Residues 168 to 179 (RKKIAVEAQTGM) lie on the Cytoplasmic side of the membrane. The chain crosses the membrane as a helical span at residues 180–197 (LVETLWLLPVAAIYLFSI). At 198 to 211 (ADSATSHMGQNALS) the chain is on the periplasmic side. A helical transmembrane segment spans residues 212–234 (LNLLLMAAGVVTTIPLLCFTGAA). Over 235 to 238 (TRLR) the chain is Cytoplasmic. Residues 239-261 (LSTLGFFQYIGPTLMFLLAVTFY) form a helical membrane-spanning segment. At 262–270 (GEVPGADKM) the chain is on the periplasmic side. A helical transmembrane segment spans residues 271–290 (VTFAFIWVALAIFVMDAIYT). The Cytoplasmic segment spans residues 291-294 (QRKK).

Belongs to the EamA transporter family.

It localises to the cell inner membrane. In Salmonella typhi, this protein is Protein RarD (rarD).